A 320-amino-acid chain; its full sequence is Nucleotide-binding protein Acid_7395 (320 aa).

Residues M1–Q34 are disordered. Position 44–51 (G44–G51) interacts with ATP. Position 94–97 (D94–E97) interacts with GTP.

Belongs to the RapZ-like family.

Its function is as follows. Displays ATPase and GTPase activities. The chain is Nucleotide-binding protein Acid_7395 from Solibacter usitatus (strain Ellin6076).